The chain runs to 497 residues: Serine hydroxymethyltransferase (497 aa).

Residues leucine 176 and 180 to 182 (GHL) contribute to the (6S)-5,6,7,8-tetrahydrofolate site. An N6-(pyridoxal phosphate)lysine modification is found at lysine 289. Residue glutamate 306 participates in (6S)-5,6,7,8-tetrahydrofolate binding.

Belongs to the SHMT family. In terms of assembly, homodimer. It depends on pyridoxal 5'-phosphate as a cofactor.

It localises to the cytoplasm. The catalysed reaction is (6R)-5,10-methylene-5,6,7,8-tetrahydrofolate + glycine + H2O = (6S)-5,6,7,8-tetrahydrofolate + L-serine. The protein operates within one-carbon metabolism; tetrahydrofolate interconversion. It functions in the pathway amino-acid biosynthesis; glycine biosynthesis; glycine from L-serine: step 1/1. Functionally, catalyzes the reversible interconversion of serine and glycine with tetrahydrofolate (THF) serving as the one-carbon carrier. This reaction serves as the major source of one-carbon groups required for the biosynthesis of purines, thymidylate, methionine, and other important biomolecules. Also exhibits THF-independent aldolase activity toward beta-hydroxyamino acids, producing glycine and aldehydes, via a retro-aldol mechanism. This is Serine hydroxymethyltransferase from Chlamydia pneumoniae (Chlamydophila pneumoniae).